A 239-amino-acid polypeptide reads, in one-letter code: ATP-dependent dethiobiotin synthetase BioD (239 aa).

15–20 contacts ATP; sequence EIGKTF. Mg(2+) is bound at residue Thr-19. The active site involves Lys-40. ATP is bound by residues Asp-57, 118 to 121, 178 to 179, and 211 to 213; these read EGVG, NH, and AHL. Mg(2+)-binding residues include Asp-57 and Glu-118.

Belongs to the dethiobiotin synthetase family. Homodimer. The cofactor is Mg(2+).

The protein localises to the cytoplasm. It catalyses the reaction (7R,8S)-7,8-diammoniononanoate + CO2 + ATP = (4R,5S)-dethiobiotin + ADP + phosphate + 3 H(+). Its pathway is cofactor biosynthesis; biotin biosynthesis; biotin from 7,8-diaminononanoate: step 1/2. In terms of biological role, catalyzes a mechanistically unusual reaction, the ATP-dependent insertion of CO2 between the N7 and N8 nitrogen atoms of 7,8-diaminopelargonic acid (DAPA, also called 7,8-diammoniononanoate) to form a ureido ring. The protein is ATP-dependent dethiobiotin synthetase BioD of Burkholderia vietnamiensis (strain G4 / LMG 22486) (Burkholderia cepacia (strain R1808)).